The primary structure comprises 100 residues: UPF0213 protein YhbQ (100 aa).

Residues 2-77 (TPWFLYLIRT…KQLTKRQKER (76 aa)) enclose the GIY-YIG domain.

The protein belongs to the UPF0213 family.

In Escherichia coli O157:H7, this protein is UPF0213 protein YhbQ.